We begin with the raw amino-acid sequence, 132 residues long: NLP effector protein 15 (132 aa).

Positions 1-9 (MYSWYFPKD) match the Conserved undecapeptide motif I motif. Residues 16-22 (GHRHDWE) carry the Hepta-peptide GHRHDWE motif II motif.

It belongs to the Necrosis inducing protein (NPP1) family.

It is found in the secreted. Functionally, secreted effector that contributes moderately to virulence during infection by P.capsici. Causes only small yellow areas at 3 days after inoculation of host C.annuum leaves; these areas expand somewhat and became necrotic at 7 days after inoculation. Leads only to chlorotic areas, without necrosis at 7 days after non-host N.benthamiana leaves infection. The protein is NLP effector protein 15 of Phytophthora capsici.